Reading from the N-terminus, the 156-residue chain is Ribosomal RNA large subunit methyltransferase H (156 aa).

S-adenosyl-L-methionine contacts are provided by residues leucine 73, glycine 104, and 123-128 (LSRLTL).

Belongs to the RNA methyltransferase RlmH family. As to quaternary structure, homodimer.

Its subcellular location is the cytoplasm. The catalysed reaction is pseudouridine(1915) in 23S rRNA + S-adenosyl-L-methionine = N(3)-methylpseudouridine(1915) in 23S rRNA + S-adenosyl-L-homocysteine + H(+). Its function is as follows. Specifically methylates the pseudouridine at position 1915 (m3Psi1915) in 23S rRNA. This is Ribosomal RNA large subunit methyltransferase H from Thiobacillus denitrificans (strain ATCC 25259 / T1).